The sequence spans 484 residues: Glycogen synthase (484 aa).

K15 provides a ligand contact to ADP-alpha-D-glucose.

It belongs to the glycosyltransferase 1 family. Bacterial/plant glycogen synthase subfamily.

It carries out the reaction [(1-&gt;4)-alpha-D-glucosyl](n) + ADP-alpha-D-glucose = [(1-&gt;4)-alpha-D-glucosyl](n+1) + ADP + H(+). It participates in glycan biosynthesis; glycogen biosynthesis. In terms of biological role, synthesizes alpha-1,4-glucan chains using ADP-glucose. This Bacillus licheniformis (strain ATCC 14580 / DSM 13 / JCM 2505 / CCUG 7422 / NBRC 12200 / NCIMB 9375 / NCTC 10341 / NRRL NRS-1264 / Gibson 46) protein is Glycogen synthase.